A 371-amino-acid chain; its full sequence is Cytochrome b (371 aa).

Helical transmembrane passes span 25 to 45, 69 to 90, 105 to 125, and 170 to 190; these read FGSM…FLAI, WTMQ…YTHI, WLSG…GYVL, and FFAL…VHII. Heme b contacts are provided by His-75 and His-89. Residues His-174 and His-188 each contribute to the heme b site. Residue His-193 coordinates a ubiquinone. Transmembrane regions (helical) follow at residues 218–238, 280–300, 312–332, and 339–358; these read YKDM…MSFS, LGGT…PFTH, FTQL…WTAT, and FILI…IINP.

It belongs to the cytochrome b family. The cytochrome bc1 complex contains 3 respiratory subunits (MT-CYB, CYC1 and UQCRFS1), 2 core proteins (UQCRC1 and UQCRC2) and probably 6 low-molecular weight proteins. The cofactor is heme b.

Its subcellular location is the mitochondrion inner membrane. Functionally, component of the ubiquinol-cytochrome c reductase complex (complex III or cytochrome b-c1 complex) that is part of the mitochondrial respiratory chain. The b-c1 complex mediates electron transfer from ubiquinol to cytochrome c. Contributes to the generation of a proton gradient across the mitochondrial membrane that is then used for ATP synthesis. This is Cytochrome b (MT-CYB) from Elapognathus coronatus (Western crowned snake).